The sequence spans 566 residues: Chondroitin sulfate proteoglycan 5 (566 aa).

The first 30 residues, 1 to 30, serve as a signal peptide directing secretion; the sequence is MGRAGGGGPGRGPPPLLLFLGAALVLASGA. Over 31–423 the chain is Extracellular; that stretch reads VPAREAGSAV…SIITDFQVMC (393 aa). An O-linked (Xyl...) (chondroitin sulfate) serine glycan is attached at serine 38. The segment at 39–82 is disordered; it reads AVEAEELVKGSPAWEPPANDTREEAGPPAAGEDEASWTAPGGEL. Asparagine 57 carries N-linked (GlcNAc...) asparagine glycosylation. Residue serine 117 is glycosylated (O-linked (Xyl...) (chondroitin sulfate) serine). Disordered stretches follow at residues 143 to 202, 215 to 248, and 262 to 354; these read IPEA…LEPQ, GLDG…TPSW, and ESDF…ASSE. The O-linked (GalNAc...) serine glycan is linked to serine 165. Residues 264-301 form an interaction with TNC and TNR region; the sequence is DFYPTTSFYDDLDEEEEEEEDDKDAVGGGDLEDENELL. Residues 273–286 are compositionally biased toward acidic residues; sequence DDLDEEEEEEEDDK. One can recognise an EGF-like domain in the interval 371-413; sequence RSVCDLFPSYCHNGGQCYLVENIGAFCRCNTQDYIWHKGMRCE. Disulfide bonds link cysteine 374–cysteine 387, cysteine 381–cysteine 397, and cysteine 399–cysteine 412. The helical transmembrane segment at 424–444 threads the bilayer; the sequence is VAVGSAALVLLLLFMMTVFFA. The interaction with GOPC stretch occupies residues 442–460; it reads FFAKKLYLLKTENTKLRRT. At 445–566 the chain is on the cytoplasmic side; the sequence is KKLYLLKTEN…DVNCLQNNLT (122 aa). Serine 467, serine 475, serine 483, and serine 543 each carry phosphoserine.

As to quaternary structure, binds TNR and probably TNC. Interacts with ERBB3 and GOPC. Interacts with MDK; this interaction is independent of the presence of chondroitin sulfate chains and promotes elongation of oligodendroglial precursor-like cells. N-glycosylated. In terms of processing, O-glycosylated; contains chondroitin sulfate glycans. Part-time proteoglycan, expressed in part as a proteoglycan exhibiting chondroitin sulfate glycans and in part as a non-proteoglycan form. The relative amount of both forms depends on tissues and tissue maturation. Post-translationally, phosphorylated; in intracellular and extracellular parts. As to expression, detected in cerebrospinal fluid (at protein level). Detected in urine (at protein level). Expressed in brain (at protein level).

The protein localises to the cell membrane. It localises to the synaptic cell membrane. Its subcellular location is the endoplasmic reticulum membrane. It is found in the golgi apparatus membrane. The protein resides in the cell surface. The protein localises to the secreted. Functionally, may function as a growth and differentiation factor involved in neuritogenesis. May induce ERBB3 activation. The chain is Chondroitin sulfate proteoglycan 5 (CSPG5) from Homo sapiens (Human).